Reading from the N-terminus, the 191-residue chain is MLAIGITGSYASGKTFILNYLSEKGYKTFCADNCIKELYKDIVLQTQILKLLPELKYFNIRKISNLIYNDDIAREKLQNFIYPLLIDKLILFKKENTNYKFVFSEIPLLYEAKFDQYFDFVVTIYCSEEIRMQRAITRASFDINIYNKIKEIQLSQDSKIAKADFAINSGVDMLDLEKQITKLIKNLECQV.

The DPCK domain occupies 3-191 (AIGITGSYAS…KLIKNLECQV (189 aa)). ATP is bound at residue 11–16 (ASGKTF).

This sequence belongs to the CoaE family.

Its subcellular location is the cytoplasm. It carries out the reaction 3'-dephospho-CoA + ATP = ADP + CoA + H(+). It participates in cofactor biosynthesis; coenzyme A biosynthesis; CoA from (R)-pantothenate: step 5/5. In terms of biological role, catalyzes the phosphorylation of the 3'-hydroxyl group of dephosphocoenzyme A to form coenzyme A. The sequence is that of Dephospho-CoA kinase from Rickettsia typhi (strain ATCC VR-144 / Wilmington).